We begin with the raw amino-acid sequence, 215 residues long: Probable ribosome-binding factor A, chloroplastic (215 aa).

A chloroplast-targeting transit peptide spans 1–52 (MPNLLHTNQSHFFFLHHPPIYTVSSKTQAFHFPQSMAPVNLRTNLSVRRTVR). A compositionally biased stretch (basic and acidic residues) spans 183–192 (KGSGEGKTEP). Residues 183–210 (KGSGEGKTEPSDSTEDDQDWEVDDPDED) are disordered. Acidic residues predominate over residues 194–210 (DSTEDDQDWEVDDPDED).

The protein belongs to the RbfA family.

It is found in the plastid. Its subcellular location is the chloroplast. This Arabidopsis thaliana (Mouse-ear cress) protein is Probable ribosome-binding factor A, chloroplastic.